The sequence spans 660 residues: Putative ATP-dependent RNA helicase Pl10 (660 aa).

A compositionally biased stretch (acidic residues) spans 1 to 11; sequence MSHVAEEDELG. Positions 1–117 are disordered; the sequence is MSHVAEEDEL…SRGGRSGFGK (117 aa). The residue at position 2 (Ser2) is an N-acetylserine. Low complexity predominate over residues 12-21; sequence LDQQLAGLDL. The span at 24 to 34 shows a compositional bias: polar residues; it reads RDSQSGGSTAS. The span at 44–66 shows a compositional bias: basic and acidic residues; that stretch reads RNREAAKAFYDKDGSRWSKDKDA. Lys55 carries the N6-acetyllysine modification. Residues Ser80, Ser84, and Ser89 each carry the phosphoserine modification. The segment covering 93–103 has biased composition (basic and acidic residues); it reads GRFDERGRSDY. Arg100 carries the post-translational modification Omega-N-methylarginine. Ser101 is subject to Phosphoserine. At Tyr103 the chain carries Phosphotyrosine. At Arg109 the chain carries Omega-N-methylarginine. Lys117 carries the post-translational modification N6-acetyllysine. Positions 179–207 match the Q motif motif; it reads ESFSDVEMGEIIMGNIELTRYTRPTPVQK. The residue at position 182 (Ser182) is a Phosphoserine. 199–206 contributes to the ATP binding site; it reads YTRPTPVQ. Positions 210 to 402 constitute a Helicase ATP-binding domain; the sequence is IPIIKEKRDL…RDFLDEYIFL (193 aa). Residue Lys214 forms a Glycyl lysine isopeptide (Lys-Gly) (interchain with G-Cter in SUMO2) linkage. An ATP-binding site is contributed by 223 to 230; it reads AQTGSGKT. The DEAD box signature appears at 346-349; it reads DEAD. The 162-residue stretch at 413–574 folds into the Helicase C-terminal domain; it reads NITQKVVWVE…EVPSWLENMA (162 aa). Ser455 is modified (phosphoserine). Residue Arg590 is modified to Omega-N-methylarginine. 3 positions are modified to phosphoserine: Ser592, Ser603, and Ser610. The interval 598–632 is disordered; it reads RDYRQSSGASSSSFSSGRASNSRSGGGSHGSSRGF. The segment covering 602-620 has biased composition (low complexity); that stretch reads QSSGASSSSFSSGRASNSR. Omega-N-methylarginine occurs at positions 615 and 630. A compositionally biased stretch (gly residues) spans 621–632; it reads SGGGSHGSSRGF.

Belongs to the DEAD box helicase family. DDX3/DED1 subfamily. In terms of tissue distribution, testis.

The enzyme catalyses ATP + H2O = ADP + phosphate + H(+). Functionally, putative ATP-dependent RNA helicase. Possible role in a key step of the spermatogenic process. This is Putative ATP-dependent RNA helicase Pl10 (D1Pas1) from Mus musculus (Mouse).